The following is a 184-amino-acid chain: ATP synthase subunit b 1 (184 aa).

A helical transmembrane segment spans residues 4 to 24; it reads LSILAALAASPAMAATGPFFS.

It belongs to the ATPase B chain family. In terms of assembly, F-type ATPases have 2 components, F(1) - the catalytic core - and F(0) - the membrane proton channel. F(1) has five subunits: alpha(3), beta(3), gamma(1), delta(1), epsilon(1). F(0) has three main subunits: a(1), b(2) and c(10-14). The alpha and beta chains form an alternating ring which encloses part of the gamma chain. F(1) is attached to F(0) by a central stalk formed by the gamma and epsilon chains, while a peripheral stalk is formed by the delta and b chains.

The protein localises to the cell inner membrane. Its function is as follows. F(1)F(0) ATP synthase produces ATP from ADP in the presence of a proton or sodium gradient. F-type ATPases consist of two structural domains, F(1) containing the extramembraneous catalytic core and F(0) containing the membrane proton channel, linked together by a central stalk and a peripheral stalk. During catalysis, ATP synthesis in the catalytic domain of F(1) is coupled via a rotary mechanism of the central stalk subunits to proton translocation. In terms of biological role, component of the F(0) channel, it forms part of the peripheral stalk, linking F(1) to F(0). The protein is ATP synthase subunit b 1 of Cereibacter sphaeroides (strain ATCC 17025 / ATH 2.4.3) (Rhodobacter sphaeroides).